The chain runs to 623 residues: Flap endonuclease 1 (623 aa).

An N-domain region spans residues 1–106 (MGIKGLTKFI…SELEKRGEKR (106 aa)). D34 is a binding site for Mg(2+). Residues R47 and R72 each coordinate DNA. Residues D88, E160, E162, D181, and D183 each contribute to the Mg(2+) site. An I-domain region spans residues 124–267 (EIKKQSGRTV…KTAYNLIKEY (144 aa)). A DNA-binding site is contributed by E160. DNA-binding residues include G245 and D247. D247 serves as a coordination point for Mg(2+). The interaction with PCNA stretch occupies residues 350–358 (TQRRLDNFF). Residues 368–517 (LVIEESQSQS…LSSNSTLHSC (150 aa)) are disordered. 2 stretches are compositionally biased toward basic and acidic residues: residues 410-424 (TKVE…KDEE) and 466-482 (QKSD…KTEQ). The segment covering 502 to 517 (AGSNTHLSSNSTLHSC) has biased composition (polar residues).

Belongs to the XPG/RAD2 endonuclease family. FEN1 subfamily. As to quaternary structure, interacts with PCNA. Three molecules of FEN1 bind to one PCNA trimer with each molecule binding to one PCNA monomer. PCNA stimulates the nuclease activity without altering cleavage specificity. Requires Mg(2+) as cofactor. Post-translationally, phosphorylated. Phosphorylation upon DNA damage induces relocalization to the nuclear plasma.

The protein resides in the nucleus. The protein localises to the nucleolus. It is found in the nucleoplasm. It localises to the mitochondrion. Functionally, structure-specific nuclease with 5'-flap endonuclease and 5'-3' exonuclease activities involved in DNA replication and repair. During DNA replication, cleaves the 5'-overhanging flap structure that is generated by displacement synthesis when DNA polymerase encounters the 5'-end of a downstream Okazaki fragment. It enters the flap from the 5'-end and then tracks to cleave the flap base, leaving a nick for ligation. Also involved in the long patch base excision repair (LP-BER) pathway, by cleaving within the apurinic/apyrimidinic (AP) site-terminated flap. Acts as a genome stabilization factor that prevents flaps from equilibrating into structures that lead to duplications and deletions. Also possesses 5'-3' exonuclease activity on nicked or gapped double-stranded DNA, and exhibits RNase H activity. Also involved in replication and repair of rDNA and in repairing mitochondrial DNA. The polypeptide is Flap endonuclease 1 (Plasmodium vivax (strain Salvador I)).